Consider the following 305-residue polypeptide: Probable xyloglucan endotransglucosylase/hydrolase protein 8 (305 aa).

The signal sequence occupies residues 1-31; the sequence is METERRIITSCSAMTALFLFMTALMASSSIA. The GH16 domain maps to 32–231; sequence ATPTQSFEDN…WKKAPFVSSY (200 aa). Residues Asn61 and Asn66 are each glycosylated (N-linked (GlcNAc...) asparagine). Glu115 serves as the catalytic Nucleophile. Residue Glu119 is the Proton donor of the active site. A xyloglucan-binding site is contributed by Glu119. N-linked (GlcNAc...) asparagine glycosylation is present at Asn123. 132–134 contacts xyloglucan; it reads QTN. Asn138 carries N-linked (GlcNAc...) asparagine glycosylation. Xyloglucan-binding positions include 142 to 144, 210 to 211, and Gly215; these read NRE and DW. Disulfide bonds link Cys239–Cys248 and Cys286–Cys299. Arg291 contacts xyloglucan.

This sequence belongs to the glycosyl hydrolase 16 family. XTH group 1 subfamily. Post-translationally, contains at least one intrachain disulfide bond essential for its enzymatic activity.

It is found in the secreted. Its subcellular location is the cell wall. The protein resides in the extracellular space. The protein localises to the apoplast. It catalyses the reaction breaks a beta-(1-&gt;4) bond in the backbone of a xyloglucan and transfers the xyloglucanyl segment on to O-4 of the non-reducing terminal glucose residue of an acceptor, which can be a xyloglucan or an oligosaccharide of xyloglucan.. Its function is as follows. Catalyzes xyloglucan endohydrolysis (XEH) and/or endotransglycosylation (XET). Cleaves and religates xyloglucan polymers, an essential constituent of the primary cell wall, and thereby participates in cell wall construction of growing tissues. This is Probable xyloglucan endotransglucosylase/hydrolase protein 8 (XTH8) from Arabidopsis thaliana (Mouse-ear cress).